The chain runs to 242 residues: Probable 2-phosphosulfolactate phosphatase (242 aa).

This sequence belongs to the ComB family. Mg(2+) serves as cofactor.

It catalyses the reaction (2R)-O-phospho-3-sulfolactate + H2O = (2R)-3-sulfolactate + phosphate. In Caldicellulosiruptor saccharolyticus (strain ATCC 43494 / DSM 8903 / Tp8T 6331), this protein is Probable 2-phosphosulfolactate phosphatase.